A 616-amino-acid polypeptide reads, in one-letter code: Dihydroxy-acid dehydratase (616 aa).

Asp-81 lines the Mg(2+) pocket. A [2Fe-2S] cluster-binding site is contributed by Cys-122. Residues Asp-123 and Lys-124 each coordinate Mg(2+). Lys-124 carries the post-translational modification N6-carboxylysine. Cys-195 serves as a coordination point for [2Fe-2S] cluster. Glu-491 provides a ligand contact to Mg(2+). Ser-517 serves as the catalytic Proton acceptor.

Belongs to the IlvD/Edd family. Homodimer. It depends on [2Fe-2S] cluster as a cofactor. Mg(2+) serves as cofactor.

It catalyses the reaction (2R)-2,3-dihydroxy-3-methylbutanoate = 3-methyl-2-oxobutanoate + H2O. The catalysed reaction is (2R,3R)-2,3-dihydroxy-3-methylpentanoate = (S)-3-methyl-2-oxopentanoate + H2O. It functions in the pathway amino-acid biosynthesis; L-isoleucine biosynthesis; L-isoleucine from 2-oxobutanoate: step 3/4. The protein operates within amino-acid biosynthesis; L-valine biosynthesis; L-valine from pyruvate: step 3/4. In terms of biological role, functions in the biosynthesis of branched-chain amino acids. Catalyzes the dehydration of (2R,3R)-2,3-dihydroxy-3-methylpentanoate (2,3-dihydroxy-3-methylvalerate) into 2-oxo-3-methylpentanoate (2-oxo-3-methylvalerate) and of (2R)-2,3-dihydroxy-3-methylbutanoate (2,3-dihydroxyisovalerate) into 2-oxo-3-methylbutanoate (2-oxoisovalerate), the penultimate precursor to L-isoleucine and L-valine, respectively. This is Dihydroxy-acid dehydratase from Shewanella sediminis (strain HAW-EB3).